We begin with the raw amino-acid sequence, 379 residues long: MSEFLPFSRPAMGVEELAAVKEVLESGWLTTGPKNQALEQAFCQLTGNQHAIAVSSATAGMHITLMALEIGKGDEVITPSLTWVSTLNMISLLGATPVMVDVDRDTLMVTPEAIESAITPRTKAIIPVHYAGAPADIDAIRAIGERYGIAVIEDAAHAVGTYYKGRHIGAKGTAIFSFHAIKNITCAEGGLIVTDNENLARQLRMLKFHGLGVDAYDRQTWGRAPQAEVLTPGYKYNLTDINAAIALTQLAKLEHLNTRRREIAQQYQQALAALPFQPLSLPAWPHVHAWHLFIIRVDEQRCGISRDALMEALKERGIGTGLHFRAAHTQKYYRERFPTLSLPNTEWNSERICSLPLFPDMTTADADRVITALQQLAGQ.

An N6-(pyridoxal phosphate)lysine modification is found at K182.

Belongs to the DegT/DnrJ/EryC1 family. ArnB subfamily. In terms of assembly, homodimer. It depends on pyridoxal 5'-phosphate as a cofactor.

It catalyses the reaction UDP-4-amino-4-deoxy-beta-L-arabinose + 2-oxoglutarate = UDP-beta-L-threo-pentopyranos-4-ulose + L-glutamate. Its pathway is nucleotide-sugar biosynthesis; UDP-4-deoxy-4-formamido-beta-L-arabinose biosynthesis; UDP-4-deoxy-4-formamido-beta-L-arabinose from UDP-alpha-D-glucuronate: step 2/3. It participates in bacterial outer membrane biogenesis; lipopolysaccharide biosynthesis. In terms of biological role, catalyzes the conversion of UDP-4-keto-arabinose (UDP-Ara4O) to UDP-4-amino-4-deoxy-L-arabinose (UDP-L-Ara4N). The modified arabinose is attached to lipid A and is required for resistance to polymyxin and cationic antimicrobial peptides. In Escherichia coli O8 (strain IAI1), this protein is UDP-4-amino-4-deoxy-L-arabinose--oxoglutarate aminotransferase.